A 620-amino-acid polypeptide reads, in one-letter code: Chaperone protein HscA homolog (620 aa).

Belongs to the heat shock protein 70 family.

In terms of biological role, chaperone involved in the maturation of iron-sulfur cluster-containing proteins. Has a low intrinsic ATPase activity which is markedly stimulated by HscB. This chain is Chaperone protein HscA homolog, found in Shewanella baltica (strain OS155 / ATCC BAA-1091).